A 447-amino-acid polypeptide reads, in one-letter code: C4-dicarboxylate transport protein 3 (447 aa).

A run of 8 helical transmembrane segments spans residues 5–27, 42–64, 77–99, 146–165, 186–208, 223–245, 315–337, and 352–374; these read TLGK…GVAA, IKLI…IARM, ALVY…VNLV, LARN…GIAL, VFSI…MAFT, LMAT…VARL, IFVA…LGVL, and FITL…VLLL.

It belongs to the dicarboxylate/amino acid:cation symporter (DAACS) (TC 2.A.23) family.

It is found in the cell inner membrane. Its function is as follows. Responsible for the transport of dicarboxylates such as succinate, fumarate, and malate from the periplasm across the membrane. The chain is C4-dicarboxylate transport protein 3 (dctA3) from Ralstonia nicotianae (strain ATCC BAA-1114 / GMI1000) (Ralstonia solanacearum).